A 432-amino-acid polypeptide reads, in one-letter code: Gamma-glutamyl phosphate reductase (432 aa).

Belongs to the gamma-glutamyl phosphate reductase family.

Its subcellular location is the cytoplasm. It carries out the reaction L-glutamate 5-semialdehyde + phosphate + NADP(+) = L-glutamyl 5-phosphate + NADPH + H(+). The protein operates within amino-acid biosynthesis; L-proline biosynthesis; L-glutamate 5-semialdehyde from L-glutamate: step 2/2. Functionally, catalyzes the NADPH-dependent reduction of L-glutamate 5-phosphate into L-glutamate 5-semialdehyde and phosphate. The product spontaneously undergoes cyclization to form 1-pyrroline-5-carboxylate. The protein is Gamma-glutamyl phosphate reductase of Methylorubrum populi (strain ATCC BAA-705 / NCIMB 13946 / BJ001) (Methylobacterium populi).